The following is a 450-amino-acid chain: Adenylosuccinate lyase (450 aa).

Residues 9–10, 75–77, and 101–102 contribute to the N(6)-(1,2-dicarboxyethyl)-AMP site; these read RY, HHD, and TS. Residue histidine 149 is the Proton donor/acceptor of the active site. Glutamine 223 lines the N(6)-(1,2-dicarboxyethyl)-AMP pocket. Serine 273 (proton donor/acceptor) is an active-site residue. Residues serine 274, 279–281, and 318–322 each bind N(6)-(1,2-dicarboxyethyl)-AMP; these read KRN and SVERV.

This sequence belongs to the lyase 1 family. Adenylosuccinate lyase subfamily. As to quaternary structure, homotetramer. Residues from neighboring subunits contribute catalytic and substrate-binding residues to each active site.

The enzyme catalyses N(6)-(1,2-dicarboxyethyl)-AMP = fumarate + AMP. It catalyses the reaction (2S)-2-[5-amino-1-(5-phospho-beta-D-ribosyl)imidazole-4-carboxamido]succinate = 5-amino-1-(5-phospho-beta-D-ribosyl)imidazole-4-carboxamide + fumarate. Its pathway is purine metabolism; AMP biosynthesis via de novo pathway; AMP from IMP: step 2/2. It functions in the pathway purine metabolism; IMP biosynthesis via de novo pathway; 5-amino-1-(5-phospho-D-ribosyl)imidazole-4-carboxamide from 5-amino-1-(5-phospho-D-ribosyl)imidazole-4-carboxylate: step 2/2. Its function is as follows. Catalyzes two reactions in de novo purine nucleotide biosynthesis. Catalyzes the breakdown of 5-aminoimidazole- (N-succinylocarboxamide) ribotide (SAICAR or 2-[5-amino-1-(5-phospho-beta-D-ribosyl)imidazole-4-carboxamido]succinate) to 5-aminoimidazole-4-carboxamide ribotide (AICAR or 5-amino-1-(5-phospho-beta-D-ribosyl)imidazole-4-carboxamide) and fumarate, and of adenylosuccinate (ADS or N(6)-(1,2-dicarboxyethyl)-AMP) to adenosine monophosphate (AMP) and fumarate. The chain is Adenylosuccinate lyase (purB) from Pyrococcus abyssi (strain GE5 / Orsay).